Consider the following 367-residue polypeptide: Cellular tumor antigen p53 (367 aa).

The tract at residues 1-30 is transcription activation (acidic); that stretch reads MAEEMEPLLEPTEVFMDLWSMLPYSMQQLP. The segment at 30 to 84 is disordered; that stretch reads PLPEDHSNWQELSPLEPSDPPPPPPPPPLPLAAAAPPPLNPPTPPRAAPSPVVPS. Residues 46–81 are compositionally biased toward pro residues; sequence PSDPPPPPPPPPLPLAAAAPPPLNPPTPPRAAPSPV. A DNA-binding region spans residues 87 to 278; sequence DYGGDFDFRV…KIEEENFRKR (192 aa). Cys-161, His-164, Cys-224, and Cys-228 together coordinate Zn(2+). The tract at residues 259–266 is interaction with DNA; that stretch reads RVCACPGR. 2 disordered regions span residues 275–303 and 333–367; these read FRKR…KKRV and LAEG…KGSD. The Bipartite nuclear localization signal motif lies at 286 to 302; that stretch reads KRAMSPPTEAPEPPKKR. Residues 308–339 are oligomerization; sequence NEIFYLQVRGRRRYEMLKEINEALQLAEGGSA. The Nuclear export signal signature appears at 322–333; sequence EMLKEINEALQL. The interval 347-364 is basic (repression of DNA-binding); that stretch reads RVKVEGPQPSCGKKLLQK.

The protein belongs to the p53 family. As to quaternary structure, binds DNA as a homotetramer. It depends on Zn(2+) as a cofactor.

The protein localises to the cytoplasm. The protein resides in the nucleus. Its function is as follows. Multifunctional transcription factor that induces cell cycle arrest, DNA repair or apoptosis upon binding to its target DNA sequence. Acts as a tumor suppressor in many tumor types; induces growth arrest or apoptosis depending on the physiological circumstances and cell type. Negatively regulates cell division by controlling expression of a set of genes required for this process. One of the activated genes is an inhibitor of cyclin-dependent kinases. Apoptosis induction seems to be mediated either by stimulation of BAX and FAS antigen expression, or by repression of Bcl-2 expression. This chain is Cellular tumor antigen p53 (TP53), found in Gallus gallus (Chicken).